The following is a 477-amino-acid chain: Homospermidine synthase (477 aa).

The protein belongs to the saccharopine dehydrogenase family. In terms of assembly, homodimer. The cofactor is NAD(+).

The enzyme catalyses 2 putrescine = sym-homospermidine + NH4(+). It catalyses the reaction putrescine + spermidine = sym-homospermidine + propane-1,3-diamine. Its function is as follows. Involved in the NAD(+)-dependent synthesis of the polyamine homospermidine from putrescine. This Blastochloris viridis (Rhodopseudomonas viridis) protein is Homospermidine synthase (hss).